A 1145-amino-acid polypeptide reads, in one-letter code: DNA polymerase subunit gamma-1, mitochondrial (1145 aa).

A mitochondrion-targeting transit peptide spans 1 to 9 (MQFHLIRKY).

Belongs to the DNA polymerase type-A family. Component of the DNA polymerase gamma complex consisting of two subunits: the catalytic subunit DNApol-gamma/DNApolG1 and the accessory subunit PolG2/DNApol-gamma35. It depends on Mg(2+) as a cofactor.

It localises to the mitochondrion. It catalyses the reaction DNA(n) + a 2'-deoxyribonucleoside 5'-triphosphate = DNA(n+1) + diphosphate. Stimulated by KCl, and inhibited by the small molecules o 2',3'-dideoxythymidine 5'-triphosphate (d2TTP) and N-ethylmaleimide (NEM). In terms of biological role, as the catalytic component of the DNA polymerase gamma complex is involved in the replication of mitochondrial DNA (mtDNA). Has both 5'-3' DNA polymerase and a highly mispair-specific 3'-5' exonuclease activity. At the end of mtDNA replication DNA ends are ligated to produce a closed circular mtDNA molecule, its exonuclease activity is required for formation of these ligatable ends by preventing DNA synthesis from continuing past the 5'-end of downstream DNA into duplex DNA regions. Does not possess DNA primase activity, does not catalyze strand displacement synthesis and does not contain a 5'-3' exonuclease activity to catalyze nick translation. Important for promoting the elimination of paternal mitochondrial DNA during spermatogenesis, however its exact role in this function has not yet been identified and appears to be independent of its 3'-5'-exonuclease activity and only partially dependent on its DNA polymerase activity. This chain is DNA polymerase subunit gamma-1, mitochondrial, found in Drosophila melanogaster (Fruit fly).